A 280-amino-acid chain; its full sequence is Urease accessory protein UreD 1 (280 aa).

The protein belongs to the UreD family. In terms of assembly, ureD, UreF and UreG form a complex that acts as a GTP-hydrolysis-dependent molecular chaperone, activating the urease apoprotein by helping to assemble the nickel containing metallocenter of UreC. The UreE protein probably delivers the nickel.

Its subcellular location is the cytoplasm. Functionally, required for maturation of urease via the functional incorporation of the urease nickel metallocenter. This is Urease accessory protein UreD 1 from Brucella abortus biovar 1 (strain 9-941).